The chain runs to 24 residues: 47 kDa cell wall protein (24 aa).

It localises to the secreted. The protein resides in the cell wall. This Nicotiana tabacum (Common tobacco) protein is 47 kDa cell wall protein.